The following is a 316-amino-acid chain: Aprataxin (316 aa).

One can recognise an FHA-like domain in the interval 1–38; it reads HASARGEGFLLLKADCNKGYVTVKQIGVNPTSVDLVDV. The tract at residues 104–142 is disordered; that stretch reads KKMEVVDTQSSSADLRPSKSSVSPHEGTTSRKEHLGHWS. Residues 110–130 are compositionally biased toward polar residues; the sequence is DTQSSSADLRPSKSSVSPHEG. Positions 142–247 constitute an HIT domain; it reads SQGLKSSMQD…ISQDFDSPAL (106 aa). 2 interaction with DNA substrate regions span residues 167–171 and 229–230; these read DKYPK and SM. A Histidine triad motif motif is present at residues 232–236; that stretch reads QLHLH. Histidine 234 functions as the Tele-AMP-histidine intermediate in the catalytic mechanism. The C2H2-type zinc finger occupies 291–313; it reads LRCHLCKQQLSTIPQLKEHLKKH.

The protein resides in the nucleus. It localises to the nucleoplasm. The protein localises to the nucleolus. The catalysed reaction is a 5'-end adenosine-5'-diphospho-5'-2'-deoxyribonucleoside-DNA + H2O = a 5'-end 5'-phospho-2'-deoxyribonucleoside-DNA + AMP + 2 H(+). The enzyme catalyses a 5'-end adenosine-5'-diphospho-5'-ribonucleoside-2'-deoxyribonucleotide-DNA + H2O = a 5'-end 5'-phospho-ribonucleoside-2'-deoxyribonucleotide-DNA + AMP + 2 H(+). It catalyses the reaction a 3'-end 2'-deoxyribonucleotide-3'-diphospho-5'-guanosine-DNA + H2O = a 3'-end 2'-deoxyribonucleotide 3'-phosphate-DNA + GMP + 2 H(+). In terms of biological role, DNA-binding protein involved in single-strand DNA break repair, double-strand DNA break repair and base excision repair. Resolves abortive DNA ligation intermediates formed either at base excision sites, or when DNA ligases attempt to repair non-ligatable breaks induced by reactive oxygen species. Catalyzes the release of adenylate groups covalently linked to 5'-phosphate termini, resulting in the production of 5'-phosphate termini that can be efficiently rejoined. Also able to hydrolyze adenosine 5'-monophosphoramidate (AMP-NH(2)) and diadenosine tetraphosphate (AppppA), but with lower catalytic activity. Likewise, catalyzes the release of 3'-linked guanosine (DNAppG) and inosine (DNAppI) from DNA, but has higher specific activity with 5'-linked adenosine (AppDNA). This chain is Aprataxin (APTX), found in Gallus gallus (Chicken).